We begin with the raw amino-acid sequence, 286 residues long: MKNILAIQSHVVFGHAGNSAAEFPMRRLGANVWPLNTVQFSNHTQYGKWTGCVMPPSHLTEIVQGIADIGQLAHCDAVLSGYLGSAEQGEHILGIVRQVKAANPQAKYFCDPVMGHPEKGCIVAPGVAEFHVRYALPASDIIAPNLIELEILSKHSVNNVNDAVQAARELIAQGPEIVLVKHLARAGYSSERFEMLLVTAQEAWHISRPLVDFGSRQPVGVGDVTSGLLLVKLLQGATLQQALEHVTAAVYEIMIATKTMQEYELQVVAAQDRIANPEHYFSATRL.

Residues serine 9 and 44–45 contribute to the substrate site; that span reads TQ. Residues aspartate 111, alanine 143, glutamate 148, lysine 181, and 208–211 each bind ATP; that span reads RPLV. Aspartate 223 contacts substrate.

The protein belongs to the pyridoxine kinase family. PdxY subfamily. Homodimer. The cofactor is Mg(2+).

It carries out the reaction pyridoxal + ATP = pyridoxal 5'-phosphate + ADP + H(+). The protein operates within cofactor metabolism; pyridoxal 5'-phosphate salvage; pyridoxal 5'-phosphate from pyridoxal: step 1/1. Pyridoxal kinase involved in the salvage pathway of pyridoxal 5'-phosphate (PLP). Catalyzes the phosphorylation of pyridoxal to PLP. The sequence is that of Pyridoxal kinase PdxY from Salmonella paratyphi A (strain ATCC 9150 / SARB42).